We begin with the raw amino-acid sequence, 501 residues long: Cytochrome P450 90A4 (501 aa).

Residues 2-22 (AAAALLLLAAAAAAVVVAMAL) form a helical membrane-spanning segment. C446 is a heme binding site.

This sequence belongs to the cytochrome P450 family. The cofactor is heme. As to expression, highly expressed in shoot apex and inflorenscence. Expressed in roots, stems, leaf blades and leaf sheaths.

The protein localises to the cell membrane. It functions in the pathway plant hormone biosynthesis; brassinosteroid biosynthesis. Functionally, catalyzes the C23-alpha-hydroxylation step in brassinosteroid biosynthesis. Converts 6-deoxocathasterone to 6-deoxoteasterone in the late C6-oxidation pathway and cathasterone to teasterone (TE) in the early C6-oxidation pathway of brassinolide (BL) biosynthesis. In Oryza sativa subsp. japonica (Rice), this protein is Cytochrome P450 90A4.